Consider the following 241-residue polypeptide: Fatty acid metabolism regulator protein (241 aa).

An HTH gntR-type domain is found at 11–79 (QSPAALAEEY…HGKPTKVNNI (69 aa)). Positions 39-58 (ERDLADKIGVTRTTLREVLQ) form a DNA-binding region, H-T-H motif.

As to quaternary structure, homodimer.

Its subcellular location is the cytoplasm. Its function is as follows. Multifunctional regulator of fatty acid metabolism. The chain is Fatty acid metabolism regulator protein from Haemophilus influenzae (strain ATCC 51907 / DSM 11121 / KW20 / Rd).